The following is a 434-amino-acid chain: Beta-enolase (434 aa).

The residue at position 2 (alanine 2) is an N-acetylalanine. Threonine 72 carries the phosphothreonine modification. Residues serine 83 and serine 157 each carry the phosphoserine modification. Residues histidine 158 and glutamate 167 each coordinate substrate. Serine 176 carries the post-translational modification Phosphoserine. The residue at position 205 (threonine 205) is a Phosphothreonine. Residue glutamate 210 is the Proton donor of the active site. A Phosphothreonine modification is found at threonine 229. Position 236 is a phosphotyrosine (tyrosine 236). A Mg(2+)-binding site is contributed by aspartate 245. The residue at position 263 (serine 263) is a Phosphoserine. Substrate is bound by residues glutamate 293 and aspartate 318. Positions 293 and 318 each coordinate Mg(2+). Lysine 343 functions as the Proton acceptor in the catalytic mechanism. Residues 370 to 373 and lysine 394 contribute to the substrate site; that span reads SHRS.

It belongs to the enolase family. Mammalian enolase is composed of 3 isozyme subunits, alpha, beta and gamma, which can form homodimers or heterodimers which are cell-type and development-specific. In vitro, interacts with several glycolytic enzymes including PKM, PGM, CKM and ALDO. Also binds PLG and troponin, in vitro. Interacts with PNKD. Requires Mg(2+) as cofactor. As to expression, brain (at protein level). The alpha/alpha homodimer is expressed in embryo and in most adult tissues. The alpha/beta heterodimer and the beta/beta homodimer are found in striated muscle, and the alpha/gamma heterodimer and the gamma/gamma homodimer in neurons. In striated muscle, the fiber-type order of ENO3 expression is IIB &gt; IIX &gt; IIA &gt; I.

It localises to the cytoplasm. It carries out the reaction (2R)-2-phosphoglycerate = phosphoenolpyruvate + H2O. It participates in carbohydrate degradation; glycolysis; pyruvate from D-glyceraldehyde 3-phosphate: step 4/5. In terms of biological role, glycolytic enzyme that catalyzes the conversion of 2-phosphoglycerate to phosphoenolpyruvate. Appears to have a function in striated muscle development and regeneration. The protein is Beta-enolase (Eno3) of Mus musculus (Mouse).